The following is a 238-amino-acid chain: uncharacterized protein (238 aa).

7 consecutive transmembrane segments (helical) span residues 22 to 42 (VYGWMTAGLAVTALTSLGLYA), 49 to 69 (LFSLWWVWCFATLGVSFYIQA), 78 to 98 (AVMGLFLAYSVLEGMFFGTMV), 105 to 125 (FGGGIVWAAFGSAAVIFGLSA), 141 to 161 (ILMLALIGLMVISLGFLVVSL), 166 to 186 (PLMYLLICYLGLIIFVGLTVV), and 208 to 228 (LSLIMALQMYCNVIMIFWYLL).

This sequence belongs to the BI1 family.

The protein localises to the cell membrane. This is an uncharacterized protein from Chlamydia muridarum (strain MoPn / Nigg).